We begin with the raw amino-acid sequence, 1070 residues long: DNA-directed RNA polymerase subunit beta (1070 aa).

This sequence belongs to the RNA polymerase beta chain family. In plastids the minimal PEP RNA polymerase catalytic core is composed of four subunits: alpha, beta, beta', and beta''. When a (nuclear-encoded) sigma factor is associated with the core the holoenzyme is formed, which can initiate transcription.

It is found in the plastid. It carries out the reaction RNA(n) + a ribonucleoside 5'-triphosphate = RNA(n+1) + diphosphate. In terms of biological role, DNA-dependent RNA polymerase catalyzes the transcription of DNA into RNA using the four ribonucleoside triphosphates as substrates. The sequence is that of DNA-directed RNA polymerase subunit beta (rpoB) from Cuscuta reflexa (Southern Asian dodder).